The following is a 124-amino-acid chain: Large ribosomal subunit protein bL12 (124 aa).

It belongs to the bacterial ribosomal protein bL12 family. Homodimer. Part of the ribosomal stalk of the 50S ribosomal subunit. Forms a multimeric L10(L12)X complex, where L10 forms an elongated spine to which 2 to 4 L12 dimers bind in a sequential fashion. Binds GTP-bound translation factors.

Forms part of the ribosomal stalk which helps the ribosome interact with GTP-bound translation factors. Is thus essential for accurate translation. The polypeptide is Large ribosomal subunit protein bL12 (Cupriavidus pinatubonensis (strain JMP 134 / LMG 1197) (Cupriavidus necator (strain JMP 134))).